The sequence spans 375 residues: Esterase AN6793 (375 aa).

A disordered region spans residues Arg-138 to Leu-158.

Belongs to the sidJ hydrolase family. Homodimer.

It participates in secondary metabolite biosynthesis. In terms of biological role, esterase; part of a cluster that mediates the biosynthesis of a yet undetermined secondary metabolite. With the HR-PKS AN6791, produces a pathway intermediate compound with molecular weight 258. This is Esterase AN6793 from Emericella nidulans (strain FGSC A4 / ATCC 38163 / CBS 112.46 / NRRL 194 / M139) (Aspergillus nidulans).